The chain runs to 210 residues: Pyridoxine/pyridoxamine 5'-phosphate oxidase (210 aa).

Substrate is bound by residues 7-10 and Lys65; that span reads REDY. Residues 60–65, 75–76, Arg81, Lys82, and Gln104 each bind FMN; these read RMVLLK and FT. Tyr122, Arg126, and Ser130 together coordinate substrate. FMN contacts are provided by residues 139 to 140 and Trp183; that span reads QS. Position 189–191 (189–191) interacts with substrate; sequence RLH. Arg193 is an FMN binding site.

It belongs to the pyridoxamine 5'-phosphate oxidase family. As to quaternary structure, homodimer. Requires FMN as cofactor.

The catalysed reaction is pyridoxamine 5'-phosphate + O2 + H2O = pyridoxal 5'-phosphate + H2O2 + NH4(+). It catalyses the reaction pyridoxine 5'-phosphate + O2 = pyridoxal 5'-phosphate + H2O2. It participates in cofactor metabolism; pyridoxal 5'-phosphate salvage; pyridoxal 5'-phosphate from pyridoxamine 5'-phosphate: step 1/1. Its pathway is cofactor metabolism; pyridoxal 5'-phosphate salvage; pyridoxal 5'-phosphate from pyridoxine 5'-phosphate: step 1/1. Catalyzes the oxidation of either pyridoxine 5'-phosphate (PNP) or pyridoxamine 5'-phosphate (PMP) into pyridoxal 5'-phosphate (PLP). The protein is Pyridoxine/pyridoxamine 5'-phosphate oxidase of Neisseria meningitidis serogroup B (strain ATCC BAA-335 / MC58).